Consider the following 265-residue polypeptide: Mlc titration factor A (265 aa).

Zn(2+)-binding residues include His-111, His-148, His-152, and Glu-211.

Belongs to the MtfA family. In terms of assembly, interacts with Mlc. Zn(2+) serves as cofactor.

The protein localises to the cytoplasm. In terms of biological role, involved in the modulation of the activity of the glucose-phosphotransferase system (glucose-PTS). Interacts with the transcriptional repressor Mlc, preventing its interaction with DNA and leading to the modulation of expression of genes regulated by Mlc, including ptsG, which encodes the PTS system glucose-specific EIICB component. Shows zinc-dependent metallopeptidase activity. This is Mlc titration factor A from Salmonella gallinarum (strain 287/91 / NCTC 13346).